Consider the following 554-residue polypeptide: Hydroxylamine reductase (554 aa).

[2Fe-2S] cluster is bound by residues Cys-3, Cys-6, Cys-18, and Cys-25. 8 residues coordinate hybrid [4Fe-2O-2S] cluster: His-252, Glu-276, Cys-320, Cys-408, Cys-436, Cys-461, Glu-495, and Lys-497. Cysteine persulfide is present on Cys-408.

It belongs to the HCP family. [2Fe-2S] cluster is required as a cofactor. It depends on hybrid [4Fe-2O-2S] cluster as a cofactor.

The protein localises to the cytoplasm. It catalyses the reaction A + NH4(+) + H2O = hydroxylamine + AH2 + H(+). In terms of biological role, catalyzes the reduction of hydroxylamine to form NH(3) and H(2)O. The polypeptide is Hydroxylamine reductase (Shewanella baltica (strain OS223)).